Here is a 626-residue protein sequence, read N- to C-terminus: Acetolactate synthase large subunit (626 aa).

A compositionally biased stretch (polar residues) spans 1–13 (MNVAASQQPTPAT). Positions 1-23 (MNVAASQQPTPATVASRGRSAAP) are disordered. Glu73 is a thiamine diphosphate binding site. FAD is bound by residues Arg175, 281 to 302 (HGTVSAVGALQRSDLLIAIGSR), and 324 to 343 (DIDPAEIGKIKQVEVPIVGD). Residues 416–496 (QHQMWAAQFV…IKIALINNGN (81 aa)) form a thiamine pyrophosphate binding region. 2 residues coordinate Mg(2+): Asp467 and Asn494.

It belongs to the TPP enzyme family. As to quaternary structure, dimer of large and small chains. Mg(2+) is required as a cofactor. Requires thiamine diphosphate as cofactor.

The enzyme catalyses 2 pyruvate + H(+) = (2S)-2-acetolactate + CO2. It participates in amino-acid biosynthesis; L-isoleucine biosynthesis; L-isoleucine from 2-oxobutanoate: step 1/4. It functions in the pathway amino-acid biosynthesis; L-valine biosynthesis; L-valine from pyruvate: step 1/4. This chain is Acetolactate synthase large subunit (ilvB), found in Corynebacterium glutamicum (strain ATCC 13032 / DSM 20300 / JCM 1318 / BCRC 11384 / CCUG 27702 / LMG 3730 / NBRC 12168 / NCIMB 10025 / NRRL B-2784 / 534).